Here is a 586-residue protein sequence, read N- to C-terminus: MFS-type transporter ucsD (586 aa).

The disordered stretch occupies residues 1-56 (MSRNSGTTLEDGPLHADPTTEAPNNATVTTNVTANDENTEKEVDADAAAAAPAEAP). Composition is skewed to low complexity over residues 19–36 (TTEA…TAND) and 46–56 (DAAAAAPAEAP). N25 and N31 each carry an N-linked (GlcNAc...) asparagine glycan. Transmembrane regions (helical) follow at residues 65–85 (WAIV…GTII), 101–121 (SFIW…PLMA), 131–151 (WLTL…GGAN), 164–184 (GFGG…LVPL), 192–212 (GIVQ…GGLL), 220–240 (WVFY…FFFL), 263–283 (AIFI…GAVY), and 290–310 (VIVP…YEWT). N324 is a glycosylation site (N-linked (GlcNAc...) asparagine). Helical transmembrane passes span 330–350 (VLGV…FMPI), 368–388 (LPLF…LAKF), 393–413 (PMHL…SLLD), 420–440 (AWAC…AILL), 458–478 (VWTF…SAIF), and 532–552 (LRTV…LIWL).

It belongs to the major facilitator superfamily.

The protein resides in the membrane. In terms of biological role, MFS-type transporter; part of the gene cluster that mediates the biosynthesis of UCS1025A, a member of the pyrrolizidinone family that acts as a strong telomerase inhibitor and displays potent antibacterial and antitumor properties. These compounds share a hemiaminal-containing pyrrolizidinone core fused with a gamma-lactone, giving a furopyrrolizidine that is connected to a decalin fragment. In Acremonium sp, this protein is MFS-type transporter ucsD.